A 317-amino-acid chain; its full sequence is Transaldolase (317 aa).

K126 functions as the Schiff-base intermediate with substrate in the catalytic mechanism.

The protein belongs to the transaldolase family. Type 1 subfamily. As to quaternary structure, homodimer.

The protein localises to the cytoplasm. The enzyme catalyses D-sedoheptulose 7-phosphate + D-glyceraldehyde 3-phosphate = D-erythrose 4-phosphate + beta-D-fructose 6-phosphate. It functions in the pathway carbohydrate degradation; pentose phosphate pathway; D-glyceraldehyde 3-phosphate and beta-D-fructose 6-phosphate from D-ribose 5-phosphate and D-xylulose 5-phosphate (non-oxidative stage): step 2/3. Transaldolase is important for the balance of metabolites in the pentose-phosphate pathway. This Burkholderia pseudomallei (strain K96243) protein is Transaldolase.